Reading from the N-terminus, the 294-residue chain is Homeobox-leucine zipper protein ATHB-16 (294 aa).

Positions 1–20 are enriched in polar residues; the sequence is MKRLSSSDSMCGLISTSTDE. Positions 1 to 31 are disordered; that stretch reads MKRLSSSDSMCGLISTSTDEQSPRGYGSNYQ. A DNA-binding region (homeobox) is located at residues 56–115; the sequence is LSEKKRRLKVDQVKALEKNFELENKLEPERKTKLAQELGLQPRQVAVWFQNRRARWKTKQ. The tract at residues 116-151 is leucine-zipper; it reads LEKDYGVLKGQYDSLRHNFDSLRRDNDSLLQEISKI. Positions 219-238 are enriched in polar residues; it reads SSDSCDSSAVLNDETSSDNG. The interval 219 to 241 is disordered; it reads SSDSCDSSAVLNDETSSDNGRLT.

Belongs to the HD-ZIP homeobox family. Class I subfamily. In terms of tissue distribution, widely expressed with a lower level in siliques.

The protein localises to the nucleus. Probable transcription factor that may function as a negative regulator of the flowering time response to photoperiod. May act to repress cell expansion during plant development. The polypeptide is Homeobox-leucine zipper protein ATHB-16 (ATHB-16) (Arabidopsis thaliana (Mouse-ear cress)).